We begin with the raw amino-acid sequence, 605 residues long: MGRLLRAARLPPLLSPLLLLLVGGAFLGACVAGSDEPGPEGLTSTSLLDLLLPTGLEPLDSEEPSETMGLGAGLGAPGSGFPSEENEESRILQPPQYFWEEEEELNDSSLDLGPTADYVFPDLTEKAGSIEDTSQAQELPNLPSPLPKMNLVEPPWHMPPREEEEEEEEEEEREKEEVEKQEEEEEEELLPVNGSQEEAKPQVRDFSLTSSSQTPGATKSRHEDSGDQASSGVEVESSMGPSLLLPSVTPTTVTPGDQDSTSQEAEATVLPAAGLGVEFEAPQEASEEATAGAAGLSGQHEEVPALPSFPQTTAPSGAEHPDEDPLGSRTSASSPLAPGDMELTPSSATLGQEDLNQQLLEGQAAEAQSRIPWDSTQVICKDWSNLAGKNYIILNMTENIDCEVFRQHRGPQLLALVEEVLPRHGSGHHGAWHISLSKPSEKEQHLLMTLVGEQGVVPTQDVLSMLGDIRRSLEEIGIQNYSTTSSCQARASQVRSDYGTLFVVLVVIGAICIIIIALGLLYNCWQRRLPKLKHVSHGEELRFVENGCHDNPTLDVASDSQSEMQEKHPSLNGGGALNGPGSWGALMGGKRDPEDSDVFEEDTHL.

Positions 1-32 (MGRLLRAARLPPLLSPLLLLLVGGAFLGACVA) are cleaved as a signal peptide. At 33–500 (GSDEPGPEGL…ASQVRSDYGT (468 aa)) the chain is on the extracellular side. O-linked (Xyl...) (chondroitin sulfate) serine glycosylation occurs at Ser79. A sulfotyrosine mark is found at Tyr97 and Tyr118. The segment at 129 to 134 (SIEDTS) is O-glycosylated at one site. The interval 129 to 347 (SIEDTSQAQE…PGDMELTPSS (219 aa)) is disordered. Ser144 carries an O-linked (GalNAc...) serine glycan. A compositionally biased stretch (acidic residues) spans 162 to 189 (EEEEEEEEEEEREKEEVEKQEEEEEEEL). Asn193 is a glycosylation site (N-linked (GlcNAc...) asparagine). Positions 207–217 (SLTSSSQTPGA) are enriched in polar residues. 2 stretches are compositionally biased toward low complexity: residues 241–255 (PSLL…TVTP) and 288–298 (EATAGAAGLSG). The N-linked (GlcNAc...) asparagine glycan is linked to Asn395. The chain crosses the membrane as a helical span at residues 501–521 (LFVVLVVIGAICIIIIALGLL). The Cytoplasmic portion of the chain corresponds to 522 to 605 (YNCWQRRLPK…SDVFEEDTHL (84 aa)). Residues 554–605 (LDVASDSQSEMQEKHPSLNGGGALNGPGSWGALMGGKRDPEDSDVFEEDTHL) are disordered. Ser570 is subject to Phosphoserine. Residues 572 to 582 (NGGGALNGPGS) show a composition bias toward gly residues. A compositionally biased stretch (acidic residues) spans 594 to 605 (EDSDVFEEDTHL). Ser596 carries the phosphoserine modification.

The protein belongs to the podocalyxin family. Homodimer; disulfide-linked. Interacts with SELL, SELE and SELP. O-glycosylated; contains chondroitin sulfate. Displays sialylated O-linked oligosaccharides. Post-translationally, sulfation is necessary for interaction with SELL. Sialylated O-linked oligosaccharides are necessary for interaction with SELL, SELE and SELP. In terms of tissue distribution, expressed in T-cells, B-cells and monocytes. Expression is higher on memory and germinal center cells than on naive B-cells (at protein level). Highly expressed in brain. Moderately expressed in pancreas, kidney and lymphoid node. Weakly expressed in liver. Detected in both endothelial cells and CD34+ bone marrow cells.

The protein resides in the membrane. Acts as a ligand for vascular selectins. Mediates rapid rolling of leukocytes over vascular surfaces through high affinity divalent cation-dependent interactions with E-, P- and L-selectins. This chain is Podocalyxin-like protein 2 (PODXL2), found in Homo sapiens (Human).